Here is a 444-residue protein sequence, read N- to C-terminus: MSEMTPREIVSELDQHIIGQADAKRAVAIALRNRWRRMQLQEPLRHEVTPKNILMIGPTGVGKTEIARRLAKLANAPFIKVEATKFTEVGYVGKEVDSIIRDLTDSAMKLVRQQEIAKNRARAEDAAEERILDALLPPAKNQWGEVENHDSHSSTRQAFRKKLREGQLDDKEIEIDVSAGVSMGVEIMAPPGMEEMTNQLQSLFQNLGSDKTKKRKMKIKDALKTLIDDEAAKLINPEELKQKAIDAVEQNGIVFIDEIDKICKKGEYSGADVSREGVQRDLLPLVEGSTVSTKHGMVKTDHILFIASGAFQVARPSDLIPELQGRLPIRVELTALSAADFERILTEPHASLTEQYKALMATEGVNIEFTTEAVKKIAEAAFRVNEKTENIGARRLHTVMERLMDKISFSASDMNGQTVNIDAAYVADALGEVVENEDLSRFIL.

ATP-binding positions include isoleucine 18 and 60–65; that span reads GVGKTE. The segment at 143–163 is disordered; sequence WGEVENHDSHSSTRQAFRKKL. ATP-binding residues include aspartate 257, glutamate 322, and arginine 394.

This sequence belongs to the ClpX chaperone family. HslU subfamily. As to quaternary structure, a double ring-shaped homohexamer of HslV is capped on each side by a ring-shaped HslU homohexamer. The assembly of the HslU/HslV complex is dependent on binding of ATP.

Its subcellular location is the cytoplasm. ATPase subunit of a proteasome-like degradation complex; this subunit has chaperone activity. The binding of ATP and its subsequent hydrolysis by HslU are essential for unfolding of protein substrates subsequently hydrolyzed by HslV. HslU recognizes the N-terminal part of its protein substrates and unfolds these before they are guided to HslV for hydrolysis. The chain is ATP-dependent protease ATPase subunit HslU from Haemophilus influenzae (strain 86-028NP).